A 228-amino-acid chain; its full sequence is Putative N-acetylmannosamine-6-phosphate 2-epimerase (228 aa).

It belongs to the NanE family.

It catalyses the reaction an N-acyl-D-glucosamine 6-phosphate = an N-acyl-D-mannosamine 6-phosphate. It participates in amino-sugar metabolism; N-acetylneuraminate degradation; D-fructose 6-phosphate from N-acetylneuraminate: step 3/5. In terms of biological role, converts N-acetylmannosamine-6-phosphate (ManNAc-6-P) to N-acetylglucosamine-6-phosphate (GlcNAc-6-P). This chain is Putative N-acetylmannosamine-6-phosphate 2-epimerase, found in Thermosynechococcus vestitus (strain NIES-2133 / IAM M-273 / BP-1).